The primary structure comprises 74 residues: Lambda-hexatoxin-Hv1d (74 aa).

The first 22 residues, 1 to 22 (MNTATCFIVLLVVATVIGGIEA), serve as a signal peptide directing secretion. The propeptide occupies 23–35 (GESDMRKDVMGLF). 4 disulfides stabilise this stretch: Cys40-Cys54, Cys47-Cys59, Cys50-Cys51, and Cys53-Cys69.

Belongs to the neurotoxin 11 (kappa toxin) family. In terms of tissue distribution, expressed by the venom gland.

Its subcellular location is the secreted. Functionally, this excitatory toxin inhibits insect calcium-activated potassium (KCa) channels (Slo-type). This Hadronyche versuta (Blue mountains funnel-web spider) protein is Lambda-hexatoxin-Hv1d.